The sequence spans 209 residues: Ribosomal RNA small subunit methyltransferase G (209 aa).

S-adenosyl-L-methionine is bound by residues Gly71, Phe76, 122–123 (AE), and Arg135.

Belongs to the methyltransferase superfamily. RNA methyltransferase RsmG family.

It localises to the cytoplasm. In terms of biological role, specifically methylates the N7 position of a guanine in 16S rRNA. The polypeptide is Ribosomal RNA small subunit methyltransferase G (Flavobacterium psychrophilum (strain ATCC 49511 / DSM 21280 / CIP 103535 / JIP02/86)).